Reading from the N-terminus, the 26-residue chain is Toxin b subunit alpha (26 aa).

In terms of assembly, toxin b is a heterodimer composed of toxin alpha and toxin beta. As to expression, expressed by the venom gland.

It localises to the secreted. Its function is as follows. Binds to sodium channels (Nav) and affects the channel activation process. In Androctonus crassicauda (Arabian fat-tailed scorpion), this protein is Toxin b subunit alpha.